A 180-amino-acid polypeptide reads, in one-letter code: Inorganic pyrophosphatase (180 aa).

Substrate contacts are provided by K30, R44, and Y56. Residues D66, D71, and D103 each contribute to the Mg(2+) site. Y142 serves as a coordination point for substrate.

The protein belongs to the PPase family. As to quaternary structure, homohexamer. It depends on Mg(2+) as a cofactor.

Its subcellular location is the cytoplasm. The catalysed reaction is diphosphate + H2O = 2 phosphate + H(+). Functionally, catalyzes the hydrolysis of inorganic pyrophosphate (PPi) forming two phosphate ions. The chain is Inorganic pyrophosphatase from Buchnera aphidicola subsp. Schizaphis graminum (strain Sg).